The chain runs to 239 residues: Tumor necrosis factor ligand superfamily member 8 (239 aa).

Residues 1–36 (MEPGLQQAGSCGAPSPDPAMQVQPGSVASPWRSTRP) are disordered. The Cytoplasmic portion of the chain corresponds to 1 to 43 (MEPGLQQAGSCGAPSPDPAMQVQPGSVASPWRSTRPWRSTSRS). Residues 44 to 67 (YFYLSTTALVCLVVAVAIILVLVV) form a helical; Signal-anchor for type II membrane protein membrane-spanning segment. The Extracellular segment spans residues 68–239 (QKKDSTPNTT…LSVFLYSSSD (172 aa)). 6 N-linked (GlcNAc...) asparagine glycosylation sites follow: N75, N86, N114, N158, N194, and N206. The THD domain occupies 103 to 230 (SWAYLQVSKH…TNTFPLDNVL (128 aa)). Cysteines 156 and 182 form a disulfide.

The protein belongs to the tumor necrosis factor family. In terms of assembly, homotrimer.

The protein localises to the membrane. Its function is as follows. Cytokine that binds to TNFRSF8/CD30. Induces proliferation of T-cells. This is Tumor necrosis factor ligand superfamily member 8 (Tnfsf8) from Mus musculus (Mouse).